The primary structure comprises 328 residues: Phenylalanine--tRNA ligase alpha subunit (328 aa).

Glu253 provides a ligand contact to Mg(2+).

Belongs to the class-II aminoacyl-tRNA synthetase family. Phe-tRNA synthetase alpha subunit type 1 subfamily. Tetramer of two alpha and two beta subunits. Mg(2+) serves as cofactor.

It localises to the cytoplasm. The catalysed reaction is tRNA(Phe) + L-phenylalanine + ATP = L-phenylalanyl-tRNA(Phe) + AMP + diphosphate + H(+). In Chromobacterium violaceum (strain ATCC 12472 / DSM 30191 / JCM 1249 / CCUG 213 / NBRC 12614 / NCIMB 9131 / NCTC 9757 / MK), this protein is Phenylalanine--tRNA ligase alpha subunit.